A 284-amino-acid chain; its full sequence is Bifunctional protein FolD 1 (284 aa).

NADP(+) contacts are provided by residues 164–166 (GRS), Ser189, and Ile230.

This sequence belongs to the tetrahydrofolate dehydrogenase/cyclohydrolase family. Homodimer.

It carries out the reaction (6R)-5,10-methylene-5,6,7,8-tetrahydrofolate + NADP(+) = (6R)-5,10-methenyltetrahydrofolate + NADPH. The enzyme catalyses (6R)-5,10-methenyltetrahydrofolate + H2O = (6R)-10-formyltetrahydrofolate + H(+). It participates in one-carbon metabolism; tetrahydrofolate interconversion. Catalyzes the oxidation of 5,10-methylenetetrahydrofolate to 5,10-methenyltetrahydrofolate and then the hydrolysis of 5,10-methenyltetrahydrofolate to 10-formyltetrahydrofolate. This chain is Bifunctional protein FolD 1, found in Rubrobacter xylanophilus (strain DSM 9941 / JCM 11954 / NBRC 16129 / PRD-1).